The primary structure comprises 403 residues: Signal-transducing adaptor protein 2 (403 aa).

Positions Pro18 to Gly130 constitute a PH domain. Tyr22 carries the post-translational modification Phosphotyrosine; by SRC. In terms of domain architecture, SH2 spans Tyr133–Glu248. Tyr250 bears the Phosphotyrosine; by PTK6 mark. The disordered stretch occupies residues Ala270–Glu308. Tyr310 is subject to Phosphotyrosine. Tyr322 carries the phosphotyrosine; by SRC modification. A disordered region spans residues Ser331–Ser374. The span at Lys343–Lys356 shows a compositional bias: pro residues. Positions Ala382–Glu402 form a coiled coil.

As to quaternary structure, interacts with PTK6 and CSF1R. Phosphorylated on tyrosine. Tyr-250 may be important for interaction with kinases. Phosphorylated by PTK6 at Tyr-250 modulates PTK6-mediated STAT3 activation. Tyr-22 and Tyr-322 appears to be phosphorylated by SRC. Widely expressed.

Its subcellular location is the cytoplasm. Substrate of protein kinase PTK6. May play a regulatory role in the acute-phase response in systemic inflammation and may modulate STAT3 activity. In Homo sapiens (Human), this protein is Signal-transducing adaptor protein 2 (STAP2).